Consider the following 505-residue polypeptide: Oxidative stress-induced growth inhibitor 2 (505 aa).

This sequence belongs to the OKL38 family. NADPH is required as a cofactor. Ubiquitous. Expressed at higher levels in testis and ovary.

It localises to the midbody. Monooxygenase catalytic activity. May be involved in meiosis or the maturation of germ cells. This is Oxidative stress-induced growth inhibitor 2 from Homo sapiens (Human).